The chain runs to 283 residues: Protease HtpX (283 aa).

2 helical membrane passes run 4 to 24 (IALF…ILSV) and 33 to 53 (GGIL…SLFM). Residue His-139 participates in Zn(2+) binding. Glu-140 is an active-site residue. A Zn(2+)-binding site is contributed by His-143. 2 helical membrane passes run 147-167 (GDMV…IFLS) and 192-212 (FLVS…IAMW). Residue Glu-218 participates in Zn(2+) binding.

This sequence belongs to the peptidase M48B family. It depends on Zn(2+) as a cofactor.

Its subcellular location is the cell inner membrane. The polypeptide is Protease HtpX (Glaesserella parasuis serovar 5 (strain SH0165) (Haemophilus parasuis)).